We begin with the raw amino-acid sequence, 1220 residues long: Diacylglycerol kinase delta (1220 aa).

The disordered stretch occupies residues 1-47; that stretch reads MAAAAGAPPPGPPQPPPPPPPEESSDSEPEAEPGSPQKLIRKVSTSG. The regulates association with membranes stretch occupies residues 1–52; the sequence is MAAAAGAPPPGPPQPPPPPPPEESSDSEPEAEPGSPQKLIRKVSTSGQIRQK. Residues 7–22 show a composition bias toward pro residues; the sequence is APPPGPPQPPPPPPPE. The 94-residue stretch at 53–146 folds into the PH domain; it reads TILKEGMLTK…WIAALKTVQN (94 aa). Phorbol-ester/DAG-type zinc fingers lie at residues 163–213 and 235–286; these read MHNW…TSNC and PHQW…VMKC. Positions 317 to 451 constitute a DAGKc domain; that stretch reads SCTSPLLVFV…MLDRWSVMAY (135 aa). Positions 554–584 are disordered; the sequence is DDESQASSSLSNPPPTIAEEAEDGDGSGNIC. The SAM domain occupies 1151–1214; the sequence is WGTEEVAAWL…LCGIKELSRS (64 aa).

Belongs to the eukaryotic diacylglycerol kinase family. In terms of assembly, homooligomer. Monomer. Interacts with AP2A2; regulates clathrin-dependent endocytosis. As to expression, widely expressed.

The protein resides in the cell membrane. The protein localises to the membrane. It is found in the clathrin-coated pit. Its subcellular location is the cytoplasm. The catalysed reaction is a 1,2-diacyl-sn-glycerol + ATP = a 1,2-diacyl-sn-glycero-3-phosphate + ADP + H(+). The enzyme catalyses 1,2-di-(9Z-octadecenoyl)-sn-glycerol + ATP = 1,2-di-(9Z-octadecenoyl)-sn-glycero-3-phosphate + ADP + H(+). It catalyses the reaction 1-octadecanoyl-2-(5Z,8Z,11Z,14Z-eicosatetraenoyl)-sn-glycerol + ATP = 1-octadecanoyl-2-(5Z,8Z,11Z,14Z-eicosatetraenoyl)-sn-glycero-3-phosphate + ADP + H(+). It participates in lipid metabolism; glycerolipid metabolism. Diacylglycerol kinase that converts diacylglycerol/DAG into phosphatidic acid/phosphatidate/PA and regulates the respective levels of these two bioactive lipids. Thereby, acts as a central switch between the signaling pathways activated by these second messengers with different cellular targets and opposite effects in numerous biological processes. By controlling the levels of diacylglycerol, regulates for instance the PKC and EGF receptor signaling pathways and plays a crucial role during development. May also regulate clathrin-dependent endocytosis. In Mus musculus (Mouse), this protein is Diacylglycerol kinase delta.